The primary structure comprises 546 residues: MSKFVFVTGGVVSSIGKGIVAASLGRLLKSRDYSVSILKLDPYINVDPGTMSPFQHGEVFVTDDGAETDLDLGHYERFTDTELSRLNSVTTGSIYQAVLNKERRGAYMGGTVQVIPHVTNEIKERILRVAKDTNPDIVITEIGGTVGDIESLPFLEAIRQFRKDVGRNNVVYMHVTLIPWIPAAKEMKTKPTQHSVKELRSIGIQPDVLVCRCHLPLQPGLKEKLSAFCDVPVESVITAQDASSIYEVPLNLEKEGLAQQTLELLNLGPRYPHLEEWENLIRQMQSPGQKLEIAIVGKYVQLGDAYLSVVEALKHAAIALNSEIELRWVSAEDVDNDSAEAHLSGVDGIVVPGGFGIRGVDGKIKAIEYARVNNIPFLGLCLGMQCSIIEWGRNVARLERANSSEFEEDTPNPVINLLPEQADVVDLGGTMRLGLYPCRLNPDSLAFSLYGQEVIYERHRHRYEFNNAYRSLFFETGYLVSGTSPDGRLVEIIELPKHPFFIATQFHPEFRSRPNKAHPLFSGFMKAALKGREEKFSLSSQHSAVS.

The amidoligase domain stretch occupies residues 1–267 (MSKFVFVTGG…AQQTLELLNL (267 aa)). Position 13 (serine 13) interacts with CTP. A UTP-binding site is contributed by serine 13. Residues 14–19 (SIGKGI) and aspartate 71 contribute to the ATP site. 2 residues coordinate Mg(2+): aspartate 71 and glutamate 141. CTP-binding positions include 148–150 (DIE), 188–193 (KTKPTQ), and lysine 224. Residues 188–193 (KTKPTQ) and lysine 224 each bind UTP. Positions 292–534 (EIAIVGKYVQ…MKAALKGREE (243 aa)) constitute a Glutamine amidotransferase type-1 domain. Glycine 354 provides a ligand contact to L-glutamine. The active-site Nucleophile; for glutamine hydrolysis is the cysteine 381. L-glutamine-binding positions include 382 to 385 (LGMQ), glutamate 405, and arginine 462. Residues histidine 507 and glutamate 509 contribute to the active site.

This sequence belongs to the CTP synthase family. As to quaternary structure, homotetramer.

The enzyme catalyses UTP + L-glutamine + ATP + H2O = CTP + L-glutamate + ADP + phosphate + 2 H(+). It catalyses the reaction L-glutamine + H2O = L-glutamate + NH4(+). The catalysed reaction is UTP + NH4(+) + ATP = CTP + ADP + phosphate + 2 H(+). It participates in pyrimidine metabolism; CTP biosynthesis via de novo pathway; CTP from UDP: step 2/2. Its activity is regulated as follows. Allosterically activated by GTP, when glutamine is the substrate; GTP has no effect on the reaction when ammonia is the substrate. The allosteric effector GTP functions by stabilizing the protein conformation that binds the tetrahedral intermediate(s) formed during glutamine hydrolysis. Inhibited by the product CTP, via allosteric rather than competitive inhibition. Catalyzes the ATP-dependent amination of UTP to CTP with either L-glutamine or ammonia as the source of nitrogen. Regulates intracellular CTP levels through interactions with the four ribonucleotide triphosphates. This is CTP synthase from Microcystis aeruginosa (strain NIES-843 / IAM M-2473).